A 338-amino-acid polypeptide reads, in one-letter code: 2-methyl-6-phytyl-1,4-hydroquinone methyltransferase, chloroplastic (338 aa).

Residues 1–51 (MASLMLNGAITFPKGLGSPGSNLHARSIPRPTLLSVTRTSTPRLSVATRCS) constitute a chloroplast transit peptide. Residues 52–307 (SSSVSSSRPS…VNNPFSFLGR (256 aa)) lie on the Chloroplast intermembrane side of the membrane. Residues 114 to 123 (VVDVGGGTGF) form an SAM motif I region. The interval 159–172 (CKIVEGDAEDLPFP) is SAM motif II. The SAM motif III stretch occupies residues 200 to 213 (RVLKIGGKACLIGP). A helical membrane pass occupies residues 308-328 (FLLGTLAAAWFVLIPIYMWIK). Residues 329-338 (DQIVPKDQPI) are Stromal-facing.

It belongs to the class I-like SAM-binding methyltransferase superfamily. MPBQ/MBSQ MT family.

It localises to the plastid. The protein resides in the chloroplast inner membrane. It catalyses the reaction 2-methyl-6-phytyl-1,4-benzene-1,4-diol + S-adenosyl-L-methionine = 2,3-dimethyl-6-phytylbenzene-1,4-diol + S-adenosyl-L-homocysteine + H(+). The catalysed reaction is 2-methyl-6-(all-trans-nonaprenyl)benzene-1,4-diol + S-adenosyl-L-methionine = plastoquinol-9 + S-adenosyl-L-homocysteine + H(+). The enzyme catalyses 6-geranylgeranyl-2-methylbenzene-1,4-diol + S-adenosyl-L-methionine = 6-geranylgeranyl-2,3-dimethylbenzene-1,4-diol + S-adenosyl-L-homocysteine + H(+). It functions in the pathway cofactor biosynthesis; tocopherol biosynthesis. Its function is as follows. Involved in a key methylation step in both tocopherols (vitamin E) and plastoquinone synthesis. Catalyzes the conversion of 2-methyl-6-phytyl-1,4-hydroquinone (MPBQ) to 2,3-dimethyl-6-phytyl-1,4-hydroquinone (DMPQ, a substrate for tocopherol cyclase), and 2-methyl-6-solanyl-1,4-benzoquinone (MSBQ) to plastoquinone. In Arabidopsis thaliana (Mouse-ear cress), this protein is 2-methyl-6-phytyl-1,4-hydroquinone methyltransferase, chloroplastic (VTE3).